Reading from the N-terminus, the 275-residue chain is 4-hydroxy-3-methylbut-2-enyl diphosphate reductase (275 aa).

Cysteine 12 serves as a coordination point for [4Fe-4S] cluster. 2 residues coordinate (2E)-4-hydroxy-3-methylbut-2-enyl diphosphate: histidine 40 and histidine 70. Residues histidine 40 and histidine 70 each coordinate dimethylallyl diphosphate. Isopentenyl diphosphate contacts are provided by histidine 40 and histidine 70. Residue cysteine 92 participates in [4Fe-4S] cluster binding. (2E)-4-hydroxy-3-methylbut-2-enyl diphosphate is bound at residue histidine 119. Dimethylallyl diphosphate is bound at residue histidine 119. Histidine 119 provides a ligand contact to isopentenyl diphosphate. Residue glutamate 121 is the Proton donor of the active site. Threonine 151 is a (2E)-4-hydroxy-3-methylbut-2-enyl diphosphate binding site. Cysteine 181 contributes to the [4Fe-4S] cluster binding site. 4 residues coordinate (2E)-4-hydroxy-3-methylbut-2-enyl diphosphate: serine 209, serine 210, asparagine 211, and serine 251. The dimethylallyl diphosphate site is built by serine 209, serine 210, asparagine 211, and serine 251. 4 residues coordinate isopentenyl diphosphate: serine 209, serine 210, asparagine 211, and serine 251.

The protein belongs to the IspH family. [4Fe-4S] cluster is required as a cofactor.

It carries out the reaction isopentenyl diphosphate + 2 oxidized [2Fe-2S]-[ferredoxin] + H2O = (2E)-4-hydroxy-3-methylbut-2-enyl diphosphate + 2 reduced [2Fe-2S]-[ferredoxin] + 2 H(+). The catalysed reaction is dimethylallyl diphosphate + 2 oxidized [2Fe-2S]-[ferredoxin] + H2O = (2E)-4-hydroxy-3-methylbut-2-enyl diphosphate + 2 reduced [2Fe-2S]-[ferredoxin] + 2 H(+). Its pathway is isoprenoid biosynthesis; dimethylallyl diphosphate biosynthesis; dimethylallyl diphosphate from (2E)-4-hydroxy-3-methylbutenyl diphosphate: step 1/1. The protein operates within isoprenoid biosynthesis; isopentenyl diphosphate biosynthesis via DXP pathway; isopentenyl diphosphate from 1-deoxy-D-xylulose 5-phosphate: step 6/6. Catalyzes the conversion of 1-hydroxy-2-methyl-2-(E)-butenyl 4-diphosphate (HMBPP) into a mixture of isopentenyl diphosphate (IPP) and dimethylallyl diphosphate (DMAPP). Acts in the terminal step of the DOXP/MEP pathway for isoprenoid precursor biosynthesis. This chain is 4-hydroxy-3-methylbut-2-enyl diphosphate reductase, found in Thermotoga petrophila (strain ATCC BAA-488 / DSM 13995 / JCM 10881 / RKU-1).